Reading from the N-terminus, the 396-residue chain is Acetate kinase (396 aa).

Asparagine 8 contacts Mg(2+). Lysine 15 contacts ATP. A substrate-binding site is contributed by arginine 89. The Proton donor/acceptor role is filled by aspartate 146. Residues 206–210 (HLGNG), 280–282 (DMR), and 328–332 (GVGEN) each bind ATP. Glutamate 382 lines the Mg(2+) pocket.

Belongs to the acetokinase family. Homodimer. Mg(2+) serves as cofactor. The cofactor is Mn(2+).

The protein localises to the cytoplasm. It carries out the reaction acetate + ATP = acetyl phosphate + ADP. It participates in metabolic intermediate biosynthesis; acetyl-CoA biosynthesis; acetyl-CoA from acetate: step 1/2. In terms of biological role, catalyzes the formation of acetyl phosphate from acetate and ATP. Can also catalyze the reverse reaction. This is Acetate kinase from Clavibacter sepedonicus (Clavibacter michiganensis subsp. sepedonicus).